The sequence spans 99 residues: Essential MCU regulator, mitochondrial (99 aa).

A mitochondrion-targeting transit peptide spans 1–39 (MAARVGVLSVAGFRAAARAGGLLRASKQSSAVSHVPCRT). Topologically, residues 40-57 (AIATSAGTVLPKPEKVSF) are mitochondrial matrix. The helical transmembrane segment at 58-77 (GLLRVFTVVIPFLYIGTLIS) threads the bilayer. At 78–99 (KNFAALLEEHDIFVPEDDDDDD) the chain is on the mitochondrial intermembrane side.

The protein belongs to the SMDT1/EMRE family. In terms of assembly, component of the uniplex complex.

The protein resides in the mitochondrion inner membrane. Functionally, essential regulatory subunit of the mitochondrial calcium uniporter complex (uniplex), a complex that mediates calcium uptake into mitochondria. Required to bridge the calcium-sensing proteins micu1 with the calcium-conducting subunit mcu. Acts by mediating activation of mcu and retention of micu1 to the mcu pore, in order to ensure tight regulation of the uniplex complex and appropriate responses to intracellular calcium signaling. This Xenopus tropicalis (Western clawed frog) protein is Essential MCU regulator, mitochondrial.